We begin with the raw amino-acid sequence, 448 residues long: N-succinylarginine dihydrolase (448 aa).

Residues Gly-19–Ser-28, Asn-110, and His-137–Arg-138 each bind substrate. Glu-174 is a catalytic residue. Residue Arg-214 participates in substrate binding. The active site involves His-250. The substrate site is built by Asp-252 and Asn-365. Cys-371 (nucleophile) is an active-site residue.

The protein belongs to the succinylarginine dihydrolase family. Homodimer.

It catalyses the reaction N(2)-succinyl-L-arginine + 2 H2O + 2 H(+) = N(2)-succinyl-L-ornithine + 2 NH4(+) + CO2. It participates in amino-acid degradation; L-arginine degradation via AST pathway; L-glutamate and succinate from L-arginine: step 2/5. In terms of biological role, catalyzes the hydrolysis of N(2)-succinylarginine into N(2)-succinylornithine, ammonia and CO(2). The protein is N-succinylarginine dihydrolase of Pseudomonas fluorescens (strain ATCC BAA-477 / NRRL B-23932 / Pf-5).